The primary structure comprises 325 residues: Putative HTH-type transcriptional regulatory protein HQ_3058A (325 aa).

Residues 132 to 186 (LADEREERGWSLGRLATELGVSRRTVSKYEDGMNASIEIAIQLEEVFDEPFSSPL) enclose the HTH cro/C1-type domain. The H-T-H motif DNA-binding region spans 143–162 (LGRLATELGVSRRTVSKYED). The interval 189–211 (MEGAESVRDSEPTPDDPDPDADD) is disordered. Acidic residues predominate over residues 200 to 211 (PTPDDPDPDADD).

This Haloquadratum walsbyi (strain DSM 16790 / HBSQ001) protein is Putative HTH-type transcriptional regulatory protein HQ_3058A.